Reading from the N-terminus, the 320-residue chain is o-succinylbenzoate synthase (320 aa).

K133 serves as the catalytic Proton donor. The Mg(2+) site is built by D161, E190, and D213. K235 acts as the Proton acceptor in catalysis.

The protein belongs to the mandelate racemase/muconate lactonizing enzyme family. MenC type 1 subfamily. It depends on a divalent metal cation as a cofactor.

The catalysed reaction is (1R,6R)-6-hydroxy-2-succinyl-cyclohexa-2,4-diene-1-carboxylate = 2-succinylbenzoate + H2O. It functions in the pathway quinol/quinone metabolism; 1,4-dihydroxy-2-naphthoate biosynthesis; 1,4-dihydroxy-2-naphthoate from chorismate: step 4/7. Its pathway is quinol/quinone metabolism; menaquinone biosynthesis. Its function is as follows. Converts 2-succinyl-6-hydroxy-2,4-cyclohexadiene-1-carboxylate (SHCHC) to 2-succinylbenzoate (OSB). The polypeptide is o-succinylbenzoate synthase (Salmonella agona (strain SL483)).